The following is a 227-amino-acid chain: Uracil-DNA glycosylase (227 aa).

Asp-65 functions as the Proton acceptor in the catalytic mechanism.

Belongs to the uracil-DNA glycosylase (UDG) superfamily. UNG family.

It localises to the cytoplasm. The enzyme catalyses Hydrolyzes single-stranded DNA or mismatched double-stranded DNA and polynucleotides, releasing free uracil.. In terms of biological role, excises uracil residues from the DNA which can arise as a result of misincorporation of dUMP residues by DNA polymerase or due to deamination of cytosine. This is Uracil-DNA glycosylase from Lactobacillus delbrueckii subsp. bulgaricus (strain ATCC 11842 / DSM 20081 / BCRC 10696 / JCM 1002 / NBRC 13953 / NCIMB 11778 / NCTC 12712 / WDCM 00102 / Lb 14).